A 321-amino-acid chain; its full sequence is Glutaminase (321 aa).

7 residues coordinate substrate: Ser-69, Asn-120, Glu-165, Asn-172, Tyr-196, Tyr-248, and Val-266.

It belongs to the glutaminase family. As to quaternary structure, homotetramer.

The enzyme catalyses L-glutamine + H2O = L-glutamate + NH4(+). The sequence is that of Glutaminase from Parabacteroides distasonis (strain ATCC 8503 / DSM 20701 / CIP 104284 / JCM 5825 / NCTC 11152).